Here is a 309-residue protein sequence, read N- to C-terminus: uncharacterized protein (309 aa).

The span at 1-16 shows a compositional bias: basic residues; that stretch reads MAGNSRRRGAVRKAGT. Positions 1-70 are disordered; it reads MAGNSRRRGA…AKRTEETETV (70 aa). G261, I281, and L290 together coordinate S-adenosyl-L-methionine.

The protein belongs to the class IV-like SAM-binding methyltransferase superfamily. RNA methyltransferase TrmH family.

This is an uncharacterized protein from Mycolicibacterium paratuberculosis (strain ATCC BAA-968 / K-10) (Mycobacterium paratuberculosis).